The chain runs to 175 residues: Thioredoxin-like protein CITRX, chloroplastic (175 aa).

The N-terminal 73 residues, 1-73 (MQAASLAFHP…REDYLVKKLS (73 aa)), are a transit peptide targeting the chloroplast. The Thioredoxin domain occupies 74–175 (AKEIQELIKG…MMRDIINNDL (102 aa)). Active-site nucleophile residues include cysteine 98 and cysteine 101. Cysteine 98 and cysteine 101 are joined by a disulfide.

It belongs to the thioredoxin family. Plant CITRX-type subfamily.

The protein resides in the plastid. Its subcellular location is the chloroplast. Its function is as follows. Probable thiol-disulfide oxidoreductase that may play a role in proper chloroplast development. The sequence is that of Thioredoxin-like protein CITRX, chloroplastic from Solanum tuberosum (Potato).